Consider the following 240-residue polypeptide: Putative RING finger protein ORF96 (240 aa).

Residues 9 to 44 form an RING-type 1 zinc finger; that stretch reads CVVCMEEKPLVVFEPCMHHNCCESCSGHVSNCPYCR. Residues 150-202 form an RING-type 2; degenerate zinc finger; that stretch reads CVICKKEIKEEVGKTYMHACCTATICKPCAKAILKAMVEKEITENLPFCPYCF.

This chain is Putative RING finger protein ORF96, found in Ostreid herpesvirus 1 (isolate France) (OsHV-1).